The primary structure comprises 124 residues: MLLPRRGLRTLPSLCLYILVLVWVVACEPEGTPTPLPAPEESRWSLVPSSVKELVGPLLTRTRERWQWFWGPGALQGFVQTYYDDHLRDLGPRAQAWLTSSRDRLLNTAQGLCPRLLCGDKDQD.

Residues 1–27 (MLLPRRGLRTLPSLCLYILVLVWVVAC) form the signal peptide.

This sequence belongs to the apolipoprotein C4 family. Post-translationally, glycosylated; contains sialic acid. Present in up to five sialylated isoforms. As to expression, blood plasma, associated primarily with VLDL and HDL. Expressed mainly in the liver.

It is found in the secreted. May participate in lipoprotein metabolism. This is Apolipoprotein C-IV (APOC4) from Oryctolagus cuniculus (Rabbit).